We begin with the raw amino-acid sequence, 1430 residues long: Death-associated protein kinase 1 (1430 aa).

A Protein kinase domain is found at 13 to 275; that stretch reads YDTGEELGSG…IQDSLQHPWI (263 aa). ATP-binding positions include 19–27, K42, 94–96, and E100; these read LGSGQFAVV and ELV. D139 (proton acceptor) is an active-site residue. D161 is an ATP binding site. The segment at 267–334 is calmodulin-binding; the sequence is QDSLQHPWIK…RSNMSVARSD (68 aa). A Phosphoserine; by RPS6KA1 and RPS6KA3 modification is found at S289. Residues 292-301 are autoinhibitory domain; the sequence is NMEKFKKFAA. S308 bears the Phosphoserine; by autocatalysis mark. S319 and S333 each carry phosphoserine. ANK repeat units lie at residues 378–407, 411–440, 444–473, 477–506, 510–539, 543–572, 576–605, and 609–638; these read HGTP…RIDV, GGSN…PLDV, SGEM…NPNI, EEET…NVNI, EGET…DLNA, DGHI…FVDY, HGNT…NLDI, and YGRT…SVEA. Residues 681 to 955 form the Roc domain; the sequence is TQNLQPRIKL…NHLQEIRSQI (275 aa). S734 carries the post-translational modification Phosphoserine; by MAPK1. One copy of the ANK 9 repeat lies at 875–904; it reads KLKNPLQVVLVATHADIMNVPRPAGGEFGY. S1115 is subject to Phosphoserine. The ANK 10 repeat unit spans residues 1162 to 1196; it reads EGDADIRLWVNGCKLANRGAELLVLLVNHGQGIEV. Positions 1312–1396 constitute a Death domain; the sequence is KLSRLLDPPD…DAADFLLKAS (85 aa).

It belongs to the protein kinase superfamily. CAMK Ser/Thr protein kinase family. DAP kinase subfamily. In terms of assembly, interacts with KLHL20. Interacts (via death domain) with MAPK1 and MAPK3. Interacts with MAP1B (via N-terminus). Interacts with PRKD1 in an oxidative stress-regulated manner. Interacts with PIN1, PDCD6, BECN1, TSC2 and STX1A. Interacts (via kinase domain) with DAPK3 (via kinase domain). Interacts with GRINB. Interacts (via death domain) with UNC5B (via death domain). Interacts with UNC5C (via death domain). The cofactor is Mg(2+). Ubiquitinated by the BCR(KLHL20) E3 ubiquitin ligase complex, leading to its degradation by the proteasome. In terms of processing, removal of the C-terminal tail of isoform 2 (corresponding to amino acids 296-337 of isoform 2) by proteolytic cleavage stimulates maximally its membrane-blebbing function. Post-translationally, in response to mitogenic stimulation (PMA or EGF), phosphorylated at Ser-289; phosphorylation suppresses DAPK1 pro-apoptotic function. Autophosphorylation at Ser-308 inhibits its catalytic activity. Phosphorylation at Ser-734 by MAPK1 increases its catalytic activity and promotes cytoplasmic retention of MAPK1. Endoplasmic-stress can cause dephosphorylation at Ser-308. Isoform 2 is expressed in normal intestinal tissue as well as in colorectal carcinomas.

The protein localises to the cytoplasm. The protein resides in the cytoskeleton. The catalysed reaction is L-seryl-[protein] + ATP = O-phospho-L-seryl-[protein] + ADP + H(+). It catalyses the reaction L-threonyl-[protein] + ATP = O-phospho-L-threonyl-[protein] + ADP + H(+). Its activity is regulated as follows. Activated by Ca(2+)/calmodulin. Regulated by a locking mechanism, involving autophosphorylation at Ser-308 and calmodulin binding. In the inactive state, Ser-308 is phosphorylated. Activation involves its dephosphorylation and a release-of-autoinhibition mechanism where binding of calmodulin induces a conformational change that relieves the steric block of the active site by the autoinhibitory domain. Activity is modulated by UNC5B and NTN1. UNC5B activates it by inhibiting the phosphorylation at Ser-308, whereas NTN1 inhibits UNC5B-mediated activation of DAPK1. Endoplasmic-stress activates by causing Ser-308 dephosphorylation. Calcium/calmodulin-dependent serine/threonine kinase involved in multiple cellular signaling pathways that trigger cell survival, apoptosis, and autophagy. Regulates both type I apoptotic and type II autophagic cell deaths signal, depending on the cellular setting. The former is caspase-dependent, while the latter is caspase-independent and is characterized by the accumulation of autophagic vesicles. Phosphorylates PIN1 resulting in inhibition of its catalytic activity, nuclear localization, and cellular function. Phosphorylates TPM1, enhancing stress fiber formation in endothelial cells. Phosphorylates STX1A and significantly decreases its binding to STXBP1. Phosphorylates PRKD1 and regulates JNK signaling by binding and activating PRKD1 under oxidative stress. Phosphorylates BECN1, reducing its interaction with BCL2 and BCL2L1 and promoting the induction of autophagy. Phosphorylates TSC2, disrupting the TSC1-TSC2 complex and stimulating mTORC1 activity in a growth factor-dependent pathway. Phosphorylates RPS6, MYL9 and DAPK3. Acts as a signaling amplifier of NMDA receptors at extrasynaptic sites for mediating brain damage in stroke. Cerebral ischemia recruits DAPK1 into the NMDA receptor complex and it phosphorylates GRINB at Ser-1303 inducing injurious Ca(2+) influx through NMDA receptor channels, resulting in an irreversible neuronal death. Required together with DAPK3 for phosphorylation of RPL13A upon interferon-gamma activation which is causing RPL13A involvement in transcript-selective translation inhibition. In terms of biological role, isoform 2 cannot induce apoptosis but can induce membrane blebbing. This is Death-associated protein kinase 1 (DAPK1) from Homo sapiens (Human).